The chain runs to 406 residues: Tryptophan synthase beta chain (406 aa).

The residue at position 99 (Lys-99) is an N6-(pyridoxal phosphate)lysine.

The protein belongs to the TrpB family. As to quaternary structure, tetramer of two alpha and two beta chains. Requires pyridoxal 5'-phosphate as cofactor.

The enzyme catalyses (1S,2R)-1-C-(indol-3-yl)glycerol 3-phosphate + L-serine = D-glyceraldehyde 3-phosphate + L-tryptophan + H2O. It functions in the pathway amino-acid biosynthesis; L-tryptophan biosynthesis; L-tryptophan from chorismate: step 5/5. The beta subunit is responsible for the synthesis of L-tryptophan from indole and L-serine. The sequence is that of Tryptophan synthase beta chain (trpB) from Agrobacterium fabrum (strain C58 / ATCC 33970) (Agrobacterium tumefaciens (strain C58)).